The following is a 556-amino-acid chain: Formate--tetrahydrofolate ligase (556 aa).

Threonine 64–threonine 71 provides a ligand contact to ATP.

Belongs to the formate--tetrahydrofolate ligase family.

It carries out the reaction (6S)-5,6,7,8-tetrahydrofolate + formate + ATP = (6R)-10-formyltetrahydrofolate + ADP + phosphate. The protein operates within one-carbon metabolism; tetrahydrofolate interconversion. In Haemophilus ducreyi (strain 35000HP / ATCC 700724), this protein is Formate--tetrahydrofolate ligase.